The sequence spans 316 residues: Ornithine carbamoyltransferase (316 aa).

Carbamoyl phosphate-binding positions include 57 to 60 (STRT), Q84, R108, and 135 to 138 (HPCQ). Residues N166, D230, and 234 to 235 (SM) contribute to the L-ornithine site. Residues 269–270 (CL) and R297 contribute to the carbamoyl phosphate site.

The protein belongs to the aspartate/ornithine carbamoyltransferase superfamily. OTCase family.

The protein localises to the cytoplasm. It catalyses the reaction carbamoyl phosphate + L-ornithine = L-citrulline + phosphate + H(+). It participates in amino-acid biosynthesis; L-arginine biosynthesis; L-arginine from L-ornithine and carbamoyl phosphate: step 1/3. Functionally, reversibly catalyzes the transfer of the carbamoyl group from carbamoyl phosphate (CP) to the N(epsilon) atom of ornithine (ORN) to produce L-citrulline. The polypeptide is Ornithine carbamoyltransferase (argF) (Bacillus cereus (strain ATCC 14579 / DSM 31 / CCUG 7414 / JCM 2152 / NBRC 15305 / NCIMB 9373 / NCTC 2599 / NRRL B-3711)).